Reading from the N-terminus, the 476-residue chain is MSPQTETKASVGFKAGVKDYKLTYYTPEYETKDTDILAAFRVTPQLGVPPEEAGAAVAAESSTGTWTTVWTDGLTSLDRYKGRCYHIEPVPGDPDQYICYVAYPLDLFEEGSVTNMFTSIVGNVFGFKALRALRLEDLRIPPAYSKTFQGPPHGIQVERDKLNKYGRPLLGCTIKPKLGLSAKNYGRACYECLRGGLDFTKDDENVNSQPFMRWRDRFVFCAEAIYKAQAETGEIKGHYLNATAGTCEEMIKRAVFARELGVPIVMHDYLTGGFTANTTLSHYCRDNGLLLHIHRAMHAVIDRQKNHGMHFRVLAKALRMSGGDHIHSGTVVGKLEGEREITLGFVDLLRDDFIEKDRSRGIFFTQDWVSMPGVIPVASGGIHVWHMPALTEIFGDDSVLQFGGGTLGHPWGNAPGAAANRVALEACVQARNEGRDLAREGNEIIKAACKWSAELAAACEIWKEIKFDGFKAMDTI.

Residues 1–2 constitute a propeptide that is removed on maturation; the sequence is MS. Pro-3 is modified (N-acetylproline). Lys-14 bears the N6,N6,N6-trimethyllysine mark. Asn-123 and Thr-173 together coordinate substrate. Lys-175 serves as the catalytic Proton acceptor. Lys-177 lines the substrate pocket. Residues Lys-201, Asp-203, and Glu-204 each contribute to the Mg(2+) site. Lys-201 bears the N6-carboxylysine mark. The active-site Proton acceptor is the His-294. Residues Arg-295, His-327, and Ser-379 each contribute to the substrate site.

Belongs to the RuBisCO large chain family. Type I subfamily. As to quaternary structure, heterohexadecamer of 8 large chains and 8 small chains; disulfide-linked. The disulfide link is formed within the large subunit homodimers. It depends on Mg(2+) as a cofactor. Post-translationally, the disulfide bond which can form in the large chain dimeric partners within the hexadecamer appears to be associated with oxidative stress and protein turnover.

The protein localises to the plastid. It localises to the chloroplast. It catalyses the reaction 2 (2R)-3-phosphoglycerate + 2 H(+) = D-ribulose 1,5-bisphosphate + CO2 + H2O. It carries out the reaction D-ribulose 1,5-bisphosphate + O2 = 2-phosphoglycolate + (2R)-3-phosphoglycerate + 2 H(+). Functionally, ruBisCO catalyzes two reactions: the carboxylation of D-ribulose 1,5-bisphosphate, the primary event in carbon dioxide fixation, as well as the oxidative fragmentation of the pentose substrate in the photorespiration process. Both reactions occur simultaneously and in competition at the same active site. The sequence is that of Ribulose bisphosphate carboxylase large chain from Zea mays (Maize).